The sequence spans 414 residues: Serine hydroxymethyltransferase (414 aa).

(6S)-5,6,7,8-tetrahydrofolate is bound by residues Leu121 and 125-127 (GHL). At Lys229 the chain carries N6-(pyridoxal phosphate)lysine.

This sequence belongs to the SHMT family. As to quaternary structure, homodimer. Pyridoxal 5'-phosphate is required as a cofactor.

The protein resides in the cytoplasm. The catalysed reaction is (6R)-5,10-methylene-5,6,7,8-tetrahydrofolate + glycine + H2O = (6S)-5,6,7,8-tetrahydrofolate + L-serine. It participates in one-carbon metabolism; tetrahydrofolate interconversion. It functions in the pathway amino-acid biosynthesis; glycine biosynthesis; glycine from L-serine: step 1/1. In terms of biological role, catalyzes the reversible interconversion of serine and glycine with tetrahydrofolate (THF) serving as the one-carbon carrier. This reaction serves as the major source of one-carbon groups required for the biosynthesis of purines, thymidylate, methionine, and other important biomolecules. Also exhibits THF-independent aldolase activity toward beta-hydroxyamino acids, producing glycine and aldehydes, via a retro-aldol mechanism. This is Serine hydroxymethyltransferase from Polaromonas sp. (strain JS666 / ATCC BAA-500).